A 428-amino-acid polypeptide reads, in one-letter code: 3-phosphoshikimate 1-carboxyvinyltransferase (428 aa).

The 3-phosphoshikimate site is built by lysine 21, serine 22, and arginine 26. Lysine 21 serves as a coordination point for phosphoenolpyruvate. Positions 91 and 119 each coordinate phosphoenolpyruvate. 3-phosphoshikimate contacts are provided by serine 164, glutamine 166, aspartate 313, and lysine 340. Glutamine 166 is a binding site for phosphoenolpyruvate. Aspartate 313 (proton acceptor) is an active-site residue. The phosphoenolpyruvate site is built by arginine 344 and arginine 386.

Belongs to the EPSP synthase family. Monomer.

The protein resides in the cytoplasm. The catalysed reaction is 3-phosphoshikimate + phosphoenolpyruvate = 5-O-(1-carboxyvinyl)-3-phosphoshikimate + phosphate. Its pathway is metabolic intermediate biosynthesis; chorismate biosynthesis; chorismate from D-erythrose 4-phosphate and phosphoenolpyruvate: step 6/7. Functionally, catalyzes the transfer of the enolpyruvyl moiety of phosphoenolpyruvate (PEP) to the 5-hydroxyl of shikimate-3-phosphate (S3P) to produce enolpyruvyl shikimate-3-phosphate and inorganic phosphate. This chain is 3-phosphoshikimate 1-carboxyvinyltransferase, found in Campylobacter jejuni (strain RM1221).